The following is a 152-amino-acid chain: Superoxide dismutase [Cu-Zn] 2 (152 aa).

Positions 45, 47, and 62 each coordinate Cu cation. A disulfide bridge connects residues Cys56 and Cys145. Zn(2+) is bound by residues His62, His70, His79, and Asp82. His119 provides a ligand contact to Cu cation.

The protein belongs to the Cu-Zn superoxide dismutase family. Homodimer. The cofactor is Cu cation. Requires Zn(2+) as cofactor.

It localises to the cytoplasm. The enzyme catalyses 2 superoxide + 2 H(+) = H2O2 + O2. Its function is as follows. Destroys radicals which are normally produced within the cells and which are toxic to biological systems. The chain is Superoxide dismutase [Cu-Zn] 2 (SODCC2) from Oryza sativa subsp. japonica (Rice).